A 604-amino-acid polypeptide reads, in one-letter code: Inositol-3-phosphate synthase 1 (604 aa).

Residues glycine 88, glycine 89, asparagine 90, asparagine 91, aspartate 163, serine 198, valine 199, glutamine 210, arginine 213, serine 251, glycine 252, asparagine 253, threonine 254, serine 303, aspartate 327, leucine 328, threonine 330, asparagine 361, asparagine 362, aspartate 363, lysine 376, glycine 456, aspartate 457, aspartate 485, and serine 486 each contribute to the NAD(+) site.

Belongs to the myo-inositol 1-phosphate synthase family. The cofactor is NAD(+).

The enzyme catalyses D-glucose 6-phosphate = 1D-myo-inositol 3-phosphate. It functions in the pathway polyol metabolism; myo-inositol biosynthesis; myo-inositol from D-glucose 6-phosphate: step 1/2. In terms of biological role, key enzyme in myo-inositol biosynthesis pathway that catalyzes the conversion of glucose 6-phosphate to 1-myo-inositol 1-phosphate in a NAD-dependent manner. Rate-limiting enzyme in the synthesis of all inositol-containing compounds. De novo-synthesized myo-inositol is essential for incorporation into GPI (glycosylphosphatidylinositol) glycolipids during intra-erythrocytic development. This chain is Inositol-3-phosphate synthase 1, found in Plasmodium falciparum (isolate 3D7).